The primary structure comprises 229 residues: Peptidase E (229 aa).

Residues S120, D135, and H157 each act as charge relay system in the active site.

This sequence belongs to the peptidase S51 family.

Its subcellular location is the cytoplasm. It catalyses the reaction Dipeptidase E catalyzes the hydrolysis of dipeptides Asp-|-Xaa. It does not act on peptides with N-terminal Glu, Asn or Gln, nor does it cleave isoaspartyl peptides.. Its function is as follows. Hydrolyzes dipeptides containing N-terminal aspartate residues. May play a role in allowing the cell to use peptide aspartate to spare carbon otherwise required for the synthesis of the aspartate family of amino acids. In Salmonella schwarzengrund (strain CVM19633), this protein is Peptidase E.